A 225-amino-acid chain; its full sequence is MHLLIVAAGSGSRMGADRNKLLLPLAGRPVLAWTIDAVMEADSITWVGIVGQPVDRAMIMELLAEAAKPVVWIEGGSTRQESVERGLQALPSVAQHVLIHDGARCLAEAALINRCAEAVVAGAAVIAATPVTDTIKRVDGQGIITGTPDRAELWAAQTPQGFAVEQLKQGHAEAQAKGWTVTDDASLYERLGWPVQVLEASPANIKVTTPFDLTVAEAVIALRAN.

This sequence belongs to the IspD/TarI cytidylyltransferase family. IspD subfamily.

It carries out the reaction 2-C-methyl-D-erythritol 4-phosphate + CTP + H(+) = 4-CDP-2-C-methyl-D-erythritol + diphosphate. It functions in the pathway isoprenoid biosynthesis; isopentenyl diphosphate biosynthesis via DXP pathway; isopentenyl diphosphate from 1-deoxy-D-xylulose 5-phosphate: step 2/6. Its function is as follows. Catalyzes the formation of 4-diphosphocytidyl-2-C-methyl-D-erythritol from CTP and 2-C-methyl-D-erythritol 4-phosphate (MEP). This is 2-C-methyl-D-erythritol 4-phosphate cytidylyltransferase from Prochlorococcus marinus (strain MIT 9313).